We begin with the raw amino-acid sequence, 248 residues long: Probable transcriptional regulatory protein FTN_1028 (248 aa).

Belongs to the TACO1 family.

Its subcellular location is the cytoplasm. The chain is Probable transcriptional regulatory protein FTN_1028 from Francisella tularensis subsp. novicida (strain U112).